Consider the following 92-residue polypeptide: QLFDQVVKGFPTWLKLDKKENPVQFKIQVWHAEHRIGFPWSEIRNISFNDKKFVIKPIDKKAPDFVFYAPRRKPDTIEVQQMKLQDFEQKTK.

An FERM domain is found at 1-72; the sequence is QLFDQVVKGF…PDFVFYAPRR (72 aa). The residue at position 15 (lysine 15) is an N6-acetyllysine. Residues 42–92 form an interaction with SCYL3 region; that stretch reads EIRNISFNDKKFVIKPIDKKAPDFVFYAPRRKPDTIEVQQMKLQDFEQKTK.

As to quaternary structure, interacts with PALS1 and NHERF2. Found in a complex with EZR, PODXL and NHERF2. Interacts with MCC, PLEKHG6, PODXL, SCYL3/PACE1, NHERF1 and TMEM8B. Interacts (when phosphorylated) with FES/FPS. Interacts with dimeric S100P, the interaction may be activating through unmasking of F-actin binding sites. Identified in complexes that contain VIM, EZR, AHNAK, BFSP1, BFSP2, ANK2, PLEC, PRX and spectrin. Detected in a complex composed of at least EZR, AHNAK, PPL and PRX. Interacts with PDPN (via cytoplasmic domain); activates RHOA and promotes epithelial-mesenchymal transition. Interacts with SPN/CD43 cytoplasmic tail, CD44 and ICAM2. Interacts with CLIC5; may work together in a complex which also includes RDX and MYO6 to stabilize linkages between the plasma membrane and subjacent actin cytoskeleton at the base of stereocilia. Phosphorylated by tyrosine-protein kinases. Phosphorylation by ROCK2 suppresses the head-to-tail association of the N-terminal and C-terminal halves resulting in an opened conformation which is capable of actin and membrane-binding. In terms of processing, S-nitrosylation is induced by interferon-gamma and oxidatively-modified low-densitity lipoprotein (LDL(ox)) possibly implicating the iNOS-S100A8/9 transnitrosylase complex.

It localises to the apical cell membrane. The protein resides in the cell projection. It is found in the microvillus membrane. The protein localises to the ruffle membrane. Its subcellular location is the cytoplasm. It localises to the cell cortex. The protein resides in the cytoskeleton. It is found in the microvillus. With respect to regulation, a head-to-tail association, of the N-terminal and C-terminal halves results in a closed conformation (inactive form) which is incapable of actin or membrane-binding. Its function is as follows. Probably involved in connections of major cytoskeletal structures to the plasma membrane. In epithelial cells, required for the formation of microvilli and membrane ruffles on the apical pole. Along with PLEKHG6, required for normal macropinocytosis. The polypeptide is Ezrin (Mesocricetus auratus (Golden hamster)).